The primary structure comprises 862 residues: Cell surface glycoprotein (862 aa).

A signal peptide spans 1-34 (MTDTQQKIKAVLLTVLMVTSVFAATIAFSGAAAA). Disordered stretches follow at residues 35–60 (SERG…SAGN), 101–126 (ILLE…EGTE), and 200–220 (VNTN…DRDD). Over residues 43–57 (YTTGPTDGNQDNVDS) the composition is skewed to polar residues. Basic and acidic residues predominate over residues 206-220 (NDDHPNPAADGDRDD). Residues asparagine 442, asparagine 520, asparagine 550, asparagine 702, and asparagine 761 are each glycosylated (N-linked (GlcNAc...) asparagine). The disordered stretch occupies residues 752 to 838 (LSDENVEPGN…TEEATTEATG (87 aa)). Residues 784–801 (SLEEEQPATDTPEPDTDT) are compositionally biased toward acidic residues. The span at 802-815 (PEPATDTPEPATDT) shows a compositional bias: low complexity. Residues 816 to 833 (PEPDTDTPEPDTETEEAT) show a composition bias toward acidic residues. Residues 838 to 858 (GPGFTAAIALIALVAAALLAV) traverse the membrane as a helical segment. Positions 839–841 (PGF) match the PGF sorting signal motif.

The protein belongs to the halobacterial S-layer protein family. Glycosylated. Post-translationally, cleaved by the archaeosortase ArtA at the C-terminus, with removal of a short hydrophobic segment. In terms of processing, lipidation.

It localises to the secreted. Its subcellular location is the cell wall. The protein localises to the S-layer. The protein resides in the cell membrane. S-layer protein. The S-layer is a paracrystalline mono-layered assembly of proteins which coat the surface of the cell. The protein is Cell surface glycoprotein of Haloarcula japonica (strain ATCC 49778 / DSM 6131 / JCM 7785 / NBRC 101032 / NCIMB 13157 / TR-1).